The primary structure comprises 359 residues: tRNA-specific 2-thiouridylase MnmA (359 aa).

Residues Gly-9–Ser-16 and Met-35 contribute to the ATP site. The active-site Nucleophile is the Cys-104. Cys-104 and Cys-200 are oxidised to a cystine. Position 128 (Gly-128) interacts with ATP. Residues Lys-150 to Gln-152 are interaction with tRNA. Cys-200 functions as the Cysteine persulfide intermediate in the catalytic mechanism. The segment at Arg-306 to Tyr-307 is interaction with tRNA.

It belongs to the MnmA/TRMU family.

Its subcellular location is the cytoplasm. It carries out the reaction S-sulfanyl-L-cysteinyl-[protein] + uridine(34) in tRNA + AH2 + ATP = 2-thiouridine(34) in tRNA + L-cysteinyl-[protein] + A + AMP + diphosphate + H(+). Functionally, catalyzes the 2-thiolation of uridine at the wobble position (U34) of tRNA, leading to the formation of s(2)U34. The chain is tRNA-specific 2-thiouridylase MnmA from Clostridium perfringens (strain ATCC 13124 / DSM 756 / JCM 1290 / NCIMB 6125 / NCTC 8237 / Type A).